The following is a 308-amino-acid chain: Bacitracin transport ATP-binding protein BcrA (308 aa).

The ABC transporter domain maps to 8–236 (IETENLTKQY…NRKYTEFDVS (229 aa)). 40-47 (GRNGAGKT) lines the ATP pocket.

This sequence belongs to the ABC transporter superfamily. As to quaternary structure, the complex is probably composed of two ATP-binding proteins (BcrA) and two transmembrane proteins (BcrB).

Its function is as follows. Essential for high-level bacitracin resistance. Part of the ABC transporter complex BcrAB. Probably responsible for energy coupling to the transport system. The polypeptide is Bacitracin transport ATP-binding protein BcrA (Enterococcus faecalis (Streptococcus faecalis)).